The following is a 107-amino-acid chain: Phosphoribosyl-ATP pyrophosphatase (107 aa).

The protein belongs to the PRA-PH family.

The protein localises to the cytoplasm. The catalysed reaction is 1-(5-phospho-beta-D-ribosyl)-ATP + H2O = 1-(5-phospho-beta-D-ribosyl)-5'-AMP + diphosphate + H(+). It participates in amino-acid biosynthesis; L-histidine biosynthesis; L-histidine from 5-phospho-alpha-D-ribose 1-diphosphate: step 2/9. This is Phosphoribosyl-ATP pyrophosphatase from Bacillus mycoides (strain KBAB4) (Bacillus weihenstephanensis).